The following is a 224-amino-acid chain: Adenylate kinase (224 aa).

10-15 contributes to the ATP binding site; that stretch reads GSGKGT. Residues 30 to 59 are NMP; it reads ESGAIFRENISKGTELGAKAKEYIDRGDLV. Residues Ser31, Arg36, 57–59, 85–88, and Gln92 contribute to the AMP site; these read DLV and GFPR. Positions 126–165 are LID; sequence GRRLCVNDNNHPNNIFIDAIKPDGDKCRVCGGELKTRSDD. Arg127 lines the ATP pocket. AMP-binding residues include Arg162 and Arg174. Pro211 contacts ATP.

Belongs to the adenylate kinase family. As to quaternary structure, monomer.

Its subcellular location is the cytoplasm. The catalysed reaction is AMP + ATP = 2 ADP. It functions in the pathway purine metabolism; AMP biosynthesis via salvage pathway; AMP from ADP: step 1/1. Catalyzes the reversible transfer of the terminal phosphate group between ATP and AMP. Plays an important role in cellular energy homeostasis and in adenine nucleotide metabolism. In Desulfosudis oleivorans (strain DSM 6200 / JCM 39069 / Hxd3) (Desulfococcus oleovorans), this protein is Adenylate kinase.